We begin with the raw amino-acid sequence, 1147 residues long: Multiple epidermal growth factor-like domains protein 10 (1147 aa).

An N-terminal signal peptide occupies residues 1-25 (MAISSSSCLGLICSLLCHWVGTASS). The necessary for interaction with AP2M1, self-assembly and formation of the irregular, mosaic-like adhesion pattern stretch occupies residues 1 to 857 (MAISSSSCLG…ALPADSYQIG (857 aa)). Over 26-857 (LNLEDPNVCS…ALPADSYQIG (832 aa)) the chain is Extracellular. The region spanning 30–107 (DPNVCSHWES…FYESRDMCVP (78 aa)) is the EMI domain. Disulfide bonds link Cys34/Cys95, Cys60/Cys69, Cys94/Cys105, Cys109/Cys124, Cys126/Cys135, Cys148/Cys160, Cys154/Cys167, Cys169/Cys178, Cys191/Cys203, Cys197/Cys210, Cys212/Cys221, Cys234/Cys246, Cys240/Cys253, Cys255/Cys264, Cys281/Cys289, Cys283/Cys296, Cys298/Cys307, Cys320/Cys332, Cys326/Cys339, Cys341/Cys350, Cys409/Cys421, Cys415/Cys428, Cys430/Cys439, Cys456/Cys464, Cys458/Cys471, Cys473/Cys482, Cys495/Cys507, Cys501/Cys514, Cys516/Cys525, Cys542/Cys550, Cys544/Cys557, Cys559/Cys568, Cys581/Cys593, Cys587/Cys600, Cys602/Cys611, Cys669/Cys681, Cys675/Cys688, Cys690/Cys699, Cys716/Cys724, Cys718/Cys731, Cys733/Cys742, Cys755/Cys767, Cys761/Cys774, Cys776/Cys785, Cys802/Cys810, Cys804/Cys817, and Cys819/Cys828. 15 EGF-like domains span residues 101–136 (SRDM…TNCS), 144–179 (WGPH…WRCE), 187–222 (YGND…AFCE), 230–265 (HGPH…TVCG), 278–308 (SQEC…ERCQ), 316–351 (YGVR…ELCE), 405–440 (YGEA…TDCS), 453–483 (SSRC…VDCS), 491–526 (WGFG…AKCE), 539–569 (AERC…VHCD), 577–612 (WGPN…TTCQ), 665–700 (FGKN…SDCS), 713–743 (IHTC…LYCT), 751–786 (YGKD…RHCE), and 799–829 (RQIC…ARCD). The N-linked (GlcNAc...) asparagine glycan is linked to Asn134. The N-linked (GlcNAc...) asparagine glycan is linked to Asn496. The chain crosses the membrane as a helical span at residues 858-878 (AIAGIVVLVLVVLFLLALFII). Residues 879-1147 (YRHKQKRKES…STSSSSSSSE (269 aa)) lie on the Cytoplasmic side of the membrane. The necessary for formation of large intracellular vacuoles stretch occupies residues 945 to 1147 (RDRMTIAKSK…STSSSSSSSE (203 aa)). Tyr1030 is subject to Phosphotyrosine. The segment at 1093-1147 (HVTQDPYDLPKNSHIPCHYDLLPVRDSSSSPKREDGGGSNSTSSNSTSSSSSSSE) is disordered. Residues 1132 to 1147 (NSTSSNSTSSSSSSSE) are compositionally biased toward low complexity.

The protein belongs to the MEGF family. Homomer. Interacts with GULP1 and ABCA1. Interacts with AP2M1. Does not interact with MEGF11. Binds with high affinity to complement C1q. Interacts (via the cytoplasmic domain) with NOTCH1 (via NICD domain). Post-translationally, ubiquitinated; mono- and polyubiquitinated forms are detected. Phosphorylated on tyrosine residues. Phosphorylation at Tyr-1030 may be important for muscle cell proliferation. As to expression, expressed in cerebellum (at protein level). Expressed in kidney, stellate cells of the cerebellum and macrophage cell lines.

It localises to the cell membrane. The protein localises to the cell projection. Its subcellular location is the phagocytic cup. Its function is as follows. Membrane receptor involved in phagocytosis by macrophages and astrocytes of apoptotic cells. Receptor for C1q, an eat-me signal, that binds phosphatidylserine expressed on the surface of apoptotic cells. Cooperates with ABCA1 within the process of engulfment. Promotes the formation of large intracellular vacuoles and may be responsible for the uptake of amyloid-beta peptides. Necessary for astrocyte-dependent apoptotic neuron clearance in the developing cerebellum. Plays a role in muscle cell proliferation, adhesion and motility. Is also an essential factor in the regulation of myogenesis. Controls the balance between skeletal muscle satellite cells proliferation and differentiation through regulation of the notch signaling pathway. May also function in the mosaic spacing of specific neuron subtypes in the retina through homotypic retinal neuron repulsion. Mosaics provide a mechanism to distribute each cell type evenly across the retina, ensuring that all parts of the visual field have access to a full set of processing elements. The chain is Multiple epidermal growth factor-like domains protein 10 from Mus musculus (Mouse).